The primary structure comprises 134 residues: Ribosome-binding factor A (134 aa).

The protein belongs to the RbfA family. Monomer. Binds 30S ribosomal subunits, but not 50S ribosomal subunits or 70S ribosomes.

Its subcellular location is the cytoplasm. In terms of biological role, one of several proteins that assist in the late maturation steps of the functional core of the 30S ribosomal subunit. Associates with free 30S ribosomal subunits (but not with 30S subunits that are part of 70S ribosomes or polysomes). Required for efficient processing of 16S rRNA. May interact with the 5'-terminal helix region of 16S rRNA. The protein is Ribosome-binding factor A of Bdellovibrio bacteriovorus (strain ATCC 15356 / DSM 50701 / NCIMB 9529 / HD100).